The primary structure comprises 383 residues: Chaperone protein DnaJ (383 aa).

Residues Asp-6 to Gly-70 form the J domain. The CR-type zinc-finger motif lies at Gly-140–Arg-222. Cys-153, Cys-156, Cys-170, Cys-173, Cys-196, Cys-199, Cys-210, and Cys-213 together coordinate Zn(2+). CXXCXGXG motif repeat units follow at residues Cys-153 to Gly-160, Cys-170 to Gly-177, Cys-196 to Gly-203, and Cys-210 to Gly-217.

This sequence belongs to the DnaJ family. In terms of assembly, homodimer. Zn(2+) is required as a cofactor.

The protein localises to the cytoplasm. In terms of biological role, participates actively in the response to hyperosmotic and heat shock by preventing the aggregation of stress-denatured proteins and by disaggregating proteins, also in an autonomous, DnaK-independent fashion. Unfolded proteins bind initially to DnaJ; upon interaction with the DnaJ-bound protein, DnaK hydrolyzes its bound ATP, resulting in the formation of a stable complex. GrpE releases ADP from DnaK; ATP binding to DnaK triggers the release of the substrate protein, thus completing the reaction cycle. Several rounds of ATP-dependent interactions between DnaJ, DnaK and GrpE are required for fully efficient folding. Also involved, together with DnaK and GrpE, in the DNA replication of plasmids through activation of initiation proteins. This Latilactobacillus sakei (Lactobacillus sakei) protein is Chaperone protein DnaJ.